The chain runs to 561 residues: Formate--tetrahydrofolate ligase (561 aa).

Residue 70–77 (TPAGEGKT) participates in ATP binding.

The protein belongs to the formate--tetrahydrofolate ligase family.

The catalysed reaction is (6S)-5,6,7,8-tetrahydrofolate + formate + ATP = (6R)-10-formyltetrahydrofolate + ADP + phosphate. The protein operates within one-carbon metabolism; tetrahydrofolate interconversion. The protein is Formate--tetrahydrofolate ligase of Pelagibacter ubique (strain HTCC1062).